The following is a 225-amino-acid chain: Jeltraxin (225 aa).

The N-terminal stretch at 1–19 (MKGLVIFFCLFYGCHVAGA) is a signal peptide. The region spanning 21 to 223 (GKTIMLFPQK…IVVLRNQFIP (203 aa)) is the Pentraxin (PTX) domain. Cysteine 51 and cysteine 112 are joined by a disulfide. Positions 75 and 76 each coordinate Ca(2+). Asparagine 87 is a glycosylation site (N-linked (GlcNAc...) asparagine). Ca(2+)-binding residues include glutamate 153, glutamine 154, aspartate 155, and glutamine 165. The N-linked (GlcNAc...) asparagine glycan is linked to asparagine 207.

Homodecamer consisting of two homopentamer units. Pentraxin (or pentaxin) have a discoid arrangement of 5 non-covalently bound subunits. Ca(2+) serves as cofactor. Glycosylated. As to expression, oviduct. Highest expression levels were detected in the pars convoluta with lower levels detected in the pars recta. No expression was detected in the pars uterina.

It is found in the secreted. Functionally, calcium-dependent beta-galactose specific lectin. The sequence is that of Jeltraxin from Lepidobatrachus laevis (Budgett's frog).